The primary structure comprises 411 residues: Eukaryotic initiation factor 4A-III (411 aa).

M1 is modified (N-acetylmethionine). At A2 the chain carries N-acetylalanine; in Eukaryotic initiation factor 4A-III, N-terminally processed. 2 positions are modified to phosphoserine: S10 and S12. Residue K19 forms a Glycyl lysine isopeptide (Lys-Gly) (interchain with G-Cter in SUMO2) linkage. Residues 38 to 66 (PTFDTMGLREDLLRGIYAYGFEKPSAIQQ) carry the Q motif motif. ATP contacts are provided by residues K60, Q65, and 85–90 (GTGKTA). Residues 69 to 239 (IKQIIKGRDV…NKFMTDPIRI (171 aa)) form the Helicase ATP-binding domain. K124 is subject to N6-acetyllysine. K152 participates in a covalent cross-link: Glycyl lysine isopeptide (Lys-Gly) (interchain with G-Cter in SUMO2). T163 is subject to Phosphothreonine. The DEAD box motif lies at 187–190 (DEAD). N6-acetyllysine is present on residues K198 and K296. Residues 250–411 (GIKQFFVAVE…EMPMNVADLI (162 aa)) form the Helicase C-terminal domain. K314 is covalently cross-linked (Glycyl lysine isopeptide (Lys-Gly) (interchain with G-Cter in SUMO2)). Position 321 is an N6-acetyllysine (K321). ATP-binding positions include D342 and 367-371 (RSGRY). Residues K374 and K382 each participate in a glycyl lysine isopeptide (Lys-Gly) (interchain with G-Cter in SUMO2) cross-link.

The protein belongs to the DEAD box helicase family. eIF4A subfamily. In terms of assembly, identified in the spliceosome C complex. Core component of the mRNA splicing-dependent exon junction complex (EJC); the core complex contains CASC3, EIF4A3, MAGOH or MAGOHB, and RBM8A. Interacts with CASC3, MAGOH, NXF1, RBM8A and ALYREF/THOC4. Component of the ALYREF/THOC4-EJC-RNA complex; in the complex interacts with MAGOH, RBM8A and THOC4 (via the WXHD motif); these interactions are likely specific to RNA-bound EJC. May interact with NOM1. Interacts with POLDIP3. Interacts with CWC22 and PRPF19 in an RNA-independent manner. Direct interaction with CWC22 is mediated by the helicase C-terminal domain. Full interaction with CWC22 occurs only when EIF4A3 is not part of the EJC and prevents EIF4A3 binding to RNA. Identified in a complex composed of the EJC core, UPF3B and UPF2. The EJC core can also interact with UPF3A (in vitro). Interacts with NCBP3. Interacts with NRDE2. Interacts with DHX34; the interaction is RNA-independent.

It localises to the nucleus. It is found in the nucleus speckle. The protein resides in the cytoplasm. The enzyme catalyses ATP + H2O = ADP + phosphate + H(+). Its activity is regulated as follows. The ATPase activity is increased some 4-fold in the presence of RNA. In terms of biological role, ATP-dependent RNA helicase. Involved in pre-mRNA splicing as component of the spliceosome. Core component of the splicing-dependent multiprotein exon junction complex (EJC) deposited at splice junctions on mRNAs. The EJC is a dynamic structure consisting of core proteins and several peripheral nuclear and cytoplasmic associated factors that join the complex only transiently either during EJC assembly or during subsequent mRNA metabolism. The EJC marks the position of the exon-exon junction in the mature mRNA for the gene expression machinery and the core components remain bound to spliced mRNAs throughout all stages of mRNA metabolism thereby influencing downstream processes including nuclear mRNA export, subcellular mRNA localization, translation efficiency and nonsense-mediated mRNA decay (NMD). Its RNA-dependent ATPase and RNA-helicase activities are induced by CASC3, but abolished in presence of the MAGOH-RBM8A heterodimer, thereby trapping the ATP-bound EJC core onto spliced mRNA in a stable conformation. The inhibition of ATPase activity by the MAGOH-RBM8A heterodimer increases the RNA-binding affinity of the EJC. Involved in translational enhancement of spliced mRNAs after formation of the 80S ribosome complex. Binds spliced mRNA in sequence-independent manner, 20-24 nucleotides upstream of mRNA exon-exon junctions. Shows higher affinity for single-stranded RNA in an ATP-bound core EJC complex than after the ATP is hydrolyzed. Involved in the splicing modulation of BCL2L1/Bcl-X (and probably other apoptotic genes); specifically inhibits formation of proapoptotic isoforms; the function is different from the established EJC assembly. Involved in craniofacial development. This Mus musculus (Mouse) protein is Eukaryotic initiation factor 4A-III (Eif4a3).